The sequence spans 359 residues: 3-dehydroquinate synthase (359 aa).

NAD(+) contacts are provided by residues 69–74 (DGEAHK), 103–107 (GVIGD), 127–128 (TT), lysine 140, lysine 149, and 167–170 (TLDT). Glutamate 182, histidine 245, and histidine 262 together coordinate Zn(2+).

This sequence belongs to the sugar phosphate cyclases superfamily. Dehydroquinate synthase family. The cofactor is Co(2+). Zn(2+) serves as cofactor. Requires NAD(+) as cofactor.

Its subcellular location is the cytoplasm. The enzyme catalyses 7-phospho-2-dehydro-3-deoxy-D-arabino-heptonate = 3-dehydroquinate + phosphate. Its pathway is metabolic intermediate biosynthesis; chorismate biosynthesis; chorismate from D-erythrose 4-phosphate and phosphoenolpyruvate: step 2/7. Functionally, catalyzes the conversion of 3-deoxy-D-arabino-heptulosonate 7-phosphate (DAHP) to dehydroquinate (DHQ). The chain is 3-dehydroquinate synthase from Methylococcus capsulatus (strain ATCC 33009 / NCIMB 11132 / Bath).